Here is a 91-residue protein sequence, read N- to C-terminus: DNA-binding protein HU (91 aa).

This sequence belongs to the bacterial histone-like protein family.

Its function is as follows. Histone-like DNA-binding protein which is capable of wrapping DNA to stabilize it, and thus to prevent its denaturation under extreme environmental conditions. The chain is DNA-binding protein HU (hup) from Clostridium pasteurianum.